The sequence spans 146 residues: Cytidine deaminase (146 aa).

The CMP/dCMP-type deaminase domain maps to 13 to 140 (EHVQRLLLSS…ELLPASFGPE (128 aa)). Residue 54-56 (NIE) participates in substrate binding. Cysteine 65 provides a ligand contact to Zn(2+). The active-site Proton donor is glutamate 67. Zn(2+)-binding residues include cysteine 99 and cysteine 102.

Belongs to the cytidine and deoxycytidylate deaminase family. In terms of assembly, homotetramer. It depends on Zn(2+) as a cofactor.

It catalyses the reaction cytidine + H2O + H(+) = uridine + NH4(+). The enzyme catalyses 2'-deoxycytidine + H2O + H(+) = 2'-deoxyuridine + NH4(+). In terms of biological role, this enzyme scavenges exogenous and endogenous cytidine and 2'-deoxycytidine for UMP synthesis. The polypeptide is Cytidine deaminase (Cda) (Mus musculus (Mouse)).